Here is a 638-residue protein sequence, read N- to C-terminus: Chaperone protein DnaK (638 aa).

Thr196 carries the post-translational modification Phosphothreonine; by autocatalysis. The disordered stretch occupies residues 592 to 638; that stretch reads ASNLYQQPGAEAGAAPQPETNGQQESKGGDGAVNAEYEVIDGDDDKK. Over residues 597-610 the composition is skewed to low complexity; it reads QQPGAEAGAAPQPE. Positions 629 to 638 are enriched in acidic residues; that stretch reads EVIDGDDDKK.

The protein belongs to the heat shock protein 70 family.

Functionally, acts as a chaperone. This chain is Chaperone protein DnaK, found in Chlorobaculum parvum (strain DSM 263 / NCIMB 8327) (Chlorobium vibrioforme subsp. thiosulfatophilum).